Reading from the N-terminus, the 124-residue chain is Large ribosomal subunit protein bL12 (124 aa).

The protein belongs to the bacterial ribosomal protein bL12 family. In terms of assembly, homodimer. Part of the ribosomal stalk of the 50S ribosomal subunit. Forms a multimeric L10(L12)X complex, where L10 forms an elongated spine to which 2 to 4 L12 dimers bind in a sequential fashion. Binds GTP-bound translation factors.

In terms of biological role, forms part of the ribosomal stalk which helps the ribosome interact with GTP-bound translation factors. Is thus essential for accurate translation. In Phytoplasma australiense, this protein is Large ribosomal subunit protein bL12.